Reading from the N-terminus, the 133-residue chain is ATP synthase epsilon chain, chloroplastic (133 aa).

This sequence belongs to the ATPase epsilon chain family. In terms of assembly, F-type ATPases have 2 components, CF(1) - the catalytic core - and CF(0) - the membrane proton channel. CF(1) has five subunits: alpha(3), beta(3), gamma(1), delta(1), epsilon(1). CF(0) has three main subunits: a, b and c.

Its subcellular location is the plastid. The protein resides in the chloroplast thylakoid membrane. Its function is as follows. Produces ATP from ADP in the presence of a proton gradient across the membrane. The polypeptide is ATP synthase epsilon chain, chloroplastic (Nicotiana sylvestris (Wood tobacco)).